The chain runs to 756 residues: Neutral ceramidase (756 aa).

Residues 1-11 are Cytoplasmic-facing; it reads MAKRTFSTLEA. The chain crosses the membrane as a helical; Signal-anchor for type II membrane protein span at residues 12-32; that stretch reads FLIFLLVIMTVITVALLTLLF. Residues 33 to 756 lie on the Lumenal side of the membrane; it reads VTSGTIENHK…ISSPFEVVTT (724 aa). Residues Thr-56, Thr-57, Thr-58, and Thr-64 are each glycosylated (O-linked (GalNAc...) threonine). Leu-110 contacts Ca(2+). His-170 contributes to the Zn(2+) binding site. A glycan (N-linked (GlcNAc...) asparagine) is linked at Asn-193. His-279 provides a ligand contact to Zn(2+). Ser-330 serves as the catalytic Nucleophile. 2 disulfides stabilise this stretch: Cys-338–Cys-352 and Cys-345–Cys-360. Asn-407 and Asn-444 each carry an N-linked (GlcNAc...) asparagine glycan. The cysteines at positions 424 and 474 are disulfide-linked. 2 residues coordinate Zn(2+): Glu-516 and Tyr-555. Ca(2+) contacts are provided by Asp-688, Ser-690, and Thr-693. A required for correct folding and localization region spans residues 746–756; sequence GISSPFEVVTT.

It belongs to the neutral ceramidase family. In terms of assembly, may interact with CAV1. It depends on Zn(2+) as a cofactor. In terms of processing, proteolytic cleavage of the N-terminus removes the signal-anchor and produces a soluble form of the protein. N-glycosylated. Required for enzyme activity. Post-translationally, O-glycosylated. Required to retain it as a type II membrane protein at the cell surface. In terms of processing, phosphorylated. May prevent ubiquitination and subsequent degradation. Ubiquitinated, leading to its degradation by the proteasome. Ubiquitination is triggered by nitric oxide. As to expression, widely expressed. Strongly expressed in small intestine and to a lower extent in liver and kidney. Highly expressed in duodenum, jejunum and ileum along the brush border of the small intestine (at protein level).

The protein resides in the cell membrane. Its subcellular location is the membrane raft. The protein localises to the membrane. It is found in the caveola. It localises to the golgi apparatus membrane. The protein resides in the mitochondrion. Its subcellular location is the secreted. The protein localises to the extracellular exosome. It catalyses the reaction an N-acylsphing-4-enine + H2O = sphing-4-enine + a fatty acid. The catalysed reaction is N-hexadecanoylsphing-4-enine + H2O = sphing-4-enine + hexadecanoate. It carries out the reaction N-dodecanoylsphing-4-enine + H2O = dodecanoate + sphing-4-enine. The enzyme catalyses N-octadecanoylsphing-4-enine + H2O = sphing-4-enine + octadecanoate. It catalyses the reaction N-octanoylsphing-4-enine + H2O = octanoate + sphing-4-enine. The catalysed reaction is N-(hexanoyl)sphing-4-enine + H2O = hexanoate + sphing-4-enine. It carries out the reaction N-tetradecanoylsphing-4-enine + H2O = tetradecanoate + sphing-4-enine. The enzyme catalyses N-(9Z-octadecenoyl)-sphing-4-enine + H2O = sphing-4-enine + (9Z)-octadecenoate. It catalyses the reaction N-(15Z-tetracosenoyl)-sphing-4-enine + H2O = (15Z)-tetracosenoate + sphing-4-enine. The catalysed reaction is sphinganine + hexadecanoate = N-hexadecanoylsphinganine + H2O. It carries out the reaction N-(octadecanoyl)-sphinganine + H2O = sphinganine + octadecanoate. It participates in lipid metabolism; sphingolipid metabolism. Its activity is regulated as follows. Inhibited by D-erythro-MAPP. In terms of biological role, plasma membrane ceramidase that hydrolyzes sphingolipid ceramides into sphingosine and free fatty acids at neutral pH. Ceramides, sphingosine, and its phosphorylated form sphingosine-1-phosphate are bioactive lipids that mediate cellular signaling pathways regulating several biological processes including cell proliferation, apoptosis and differentiation. Also catalyzes the reverse reaction allowing the synthesis of ceramides from fatty acids and sphingosine. Together with sphingomyelinase, participates in the production of sphingosine and sphingosine-1-phosphate from the degradation of sphingomyelin, a sphingolipid enriched in the plasma membrane of cells. Also participates in the hydrolysis of ceramides from the extracellular milieu allowing the production of sphingosine-1-phosphate inside and outside cells. This is the case for instance with the digestion of dietary sphingolipids in the intestinal tract. This chain is Neutral ceramidase (Asah2), found in Mus musculus (Mouse).